Here is a 501-residue protein sequence, read N- to C-terminus: MGVLVVLLGVLSFLGRTLGGSPALHWDSTSCHLARPIPGRPLRSLSFLGKDAQGLALFHAHWDGHGRLQVCSRQDEPELTAAYGALCAGEITRGSFIHTPGPELQRALATLQSQWEACRGPAESPAGTREKRAAGQNGVPGIGRQWVKRGWTVPGTLWCGVGDSAGNSSELGVFQGPDLCCREHDRCPHNVSPFQYNYGIRNYRFHTISHCNCDARFQQCLQDQRDSVSDIMGVAFFNVLAIPCFVLEEQEACVEWYWWGGCRRYGSVPFARLQPRTFYNASWSSPATSLTPSPQNPALSRPQPMQHPQQWPSEWKESKSPSKTNATALQAPVASPGSDRASTVQLEVTHPGFQGTTGGRKPPGAHRACRSFRHLDQCEHQIGPQETKFQLFNSAHEPLFHCNCTRRLARFLRLHGPPVGASMLWELPGMTCFKLAPPLDCAEGKGCPRDPRAFKVSARHLLRLQQRRLQLQGTGTDNGQVWPSEDQGAPISFYNRCLQLT.

A signal peptide spans 1-19; it reads MGVLVVLLGVLSFLGRTLG. Residues 119–139 are disordered; sequence RGPAESPAGTREKRAAGQNGV. Positions 150–291 are phospholipase A2-like; sequence GWTVPGTLWC…SWSSPATSLT (142 aa). 3 residues coordinate Ca(2+): W158, G160, and G162. Intrachain disulfides connect C159–C181, C180–C220, C187–C213, and C211–C244. An N-linked (GlcNAc...) asparagine glycan is attached at N167. Residue H184 is part of the active site. Residue D185 participates in Ca(2+) binding. The active site involves D214. The N-linked (GlcNAc...) asparagine glycan is linked to N280. A compositionally biased stretch (polar residues) spans 284–298; the sequence is SSPATSLTPSPQNPA. The segment at 284-339 is disordered; it reads SSPATSLTPSPQNPALSRPQPMQHPQQWPSEWKESKSPSKTNATALQAPVASPGSD. N-linked (GlcNAc...) asparagine glycans are attached at residues N325 and N403.

This sequence belongs to the phospholipase A2 family. Ca(2+) serves as cofactor. In terms of processing, N-glycosylation does not affect the catalytic activity, but is required for proper secretion. A nonglycosylated form was observed in several cell types. In several cell types, the N- and C-termini are cleaved off.

It is found in the secreted. Its subcellular location is the cell membrane. The protein localises to the cytoplasm. It localises to the cytoskeleton. The protein resides in the microtubule organizing center. It is found in the centrosome. Its subcellular location is the centriole. The protein localises to the recycling endosome. It catalyses the reaction a 1,2-diacyl-sn-glycero-3-phosphocholine + H2O = a 1-acyl-sn-glycero-3-phosphocholine + a fatty acid + H(+). The enzyme catalyses 1-hexadecanoyl-2-(9Z,12Z-octadecadienoyl)-sn-glycero-3-phosphocholine + H2O = (9Z,12Z)-octadecadienoate + 1-hexadecanoyl-sn-glycero-3-phosphocholine + H(+). It carries out the reaction 1-hexadecanoyl-2-(5Z,8Z,11Z,14Z-eicosatetraenoyl)-sn-glycero-3-phosphocholine + H2O = 1-hexadecanoyl-sn-glycero-3-phosphocholine + (5Z,8Z,11Z,14Z)-eicosatetraenoate + H(+). The catalysed reaction is 1-hexadecanoyl-2-(9Z,12Z-octadecadienoyl)-sn-glycero-3-phosphoethanolamine + H2O = 1-hexadecanoyl-sn-glycero-3-phosphoethanolamine + (9Z,12Z)-octadecadienoate + H(+). It catalyses the reaction 1-hexadecanoyl-2-(5Z,8Z,11Z,14Z-eicosatetraenoyl)-sn-glycero-3-phosphoethanolamine + H2O = 1-hexadecanoyl-sn-glycero-3-phosphoethanolamine + (5Z,8Z,11Z,14Z)-eicosatetraenoate + H(+). Functionally, secretory calcium-dependent phospholipase A2 that primarily targets extracellular phospholipids. Hydrolyzes the ester bond of the fatty acyl group attached at sn-2 position of phospholipids without apparent head group selectivity. Contributes to phospholipid remodeling of low-density lipoprotein (LDL) and high-density lipoprotein (HDL) particles. Hydrolyzes LDL phospholipids releasing unsaturated fatty acids that regulate macrophage differentiation toward foam cells. May act in an autocrine and paracrine manner. Secreted by immature mast cells, acts on nearby fibroblasts upstream to PTDGS to synthesize prostaglandin D2 (PGD2), which in turn promotes mast cell maturation and degranulation via PTGDR. Secreted by epididymal epithelium, acts on immature sperm cells within the duct, modulating the degree of unsaturation of the fatty acyl components of phosphatidylcholines required for acrosome assembly and sperm cell motility. Facilitates the replacement of fatty acyl chains in phosphatidylcholines in sperm membranes from omega-6 and omega-9 to omega-3 polyunsaturated fatty acids (PUFAs). Coupled to lipoxygenase pathway, may process omega-6 PUFAs to generate oxygenated lipid mediators in the male reproductive tract. At pericentrosomal preciliary compartment, negatively regulates ciliogenesis likely by regulating endocytotic recycling of ciliary membrane protein. Coupled to cyclooxygenase pathway provides arachidonate to generate prostaglandin E2 (PGE2), a potent immunomodulatory lipid in inflammation and tumorigenesis. At colonic epithelial barrier, preferentially hydrolyzes phospholipids having arachidonate and docosahexaenoate at sn-2 position, contributing to the generation of oxygenated metabolites involved in colonic stem cell homeostasis. Releases C16:0 and C18:0 lysophosphatidylcholine subclasses from neuron plasma membranes and promotes neurite outgrowth and neuron survival. This Bos taurus (Bovine) protein is Group 3 secretory phospholipase A2 (PLA2G3).